Here is a 251-residue protein sequence, read N- to C-terminus: NADPH-dependent oxidoreductase (251 aa).

It belongs to the flavin oxidoreductase frp family. The cofactor is FMN.

Its function is as follows. Reduces FMN, organic nitro compounds and disulfide DTNB. Involved in maintenance of the cellular redox state and the disulfide stress response. The sequence is that of NADPH-dependent oxidoreductase (nfrA) from Staphylococcus saprophyticus subsp. saprophyticus (strain ATCC 15305 / DSM 20229 / NCIMB 8711 / NCTC 7292 / S-41).